The following is a 331-amino-acid chain: Phenylalanine--tRNA ligase alpha subunit (331 aa).

A Mg(2+)-binding site is contributed by Glu252.

The protein belongs to the class-II aminoacyl-tRNA synthetase family. Phe-tRNA synthetase alpha subunit type 1 subfamily. As to quaternary structure, tetramer of two alpha and two beta subunits. The cofactor is Mg(2+).

The protein localises to the cytoplasm. The enzyme catalyses tRNA(Phe) + L-phenylalanine + ATP = L-phenylalanyl-tRNA(Phe) + AMP + diphosphate + H(+). This is Phenylalanine--tRNA ligase alpha subunit from Hahella chejuensis (strain KCTC 2396).